The sequence spans 490 residues: Betaine aldehyde dehydrogenase (490 aa).

A K(+)-binding site is contributed by D93. 150 to 152 (GAW) provides a ligand contact to NAD(+). K162 functions as the Charge relay system in the catalytic mechanism. Residue 176-179 (KPSE) coordinates NAD(+). V180 contacts K(+). 230-233 (GVKT) contributes to the NAD(+) binding site. L246 lines the K(+) pocket. E252 functions as the Proton acceptor in the catalytic mechanism. NAD(+) contacts are provided by G254, C286, and E387. C286 functions as the Nucleophile in the catalytic mechanism. The residue at position 286 (C286) is a Cysteine sulfenic acid (-SOH). K(+) contacts are provided by K457 and G460. The active-site Charge relay system is E464.

This sequence belongs to the aldehyde dehydrogenase family. In terms of assembly, dimer of dimers. K(+) is required as a cofactor.

The catalysed reaction is betaine aldehyde + NAD(+) + H2O = glycine betaine + NADH + 2 H(+). It functions in the pathway amine and polyamine biosynthesis; betaine biosynthesis via choline pathway; betaine from betaine aldehyde: step 1/1. In terms of biological role, involved in the biosynthesis of the osmoprotectant glycine betaine. Catalyzes the irreversible oxidation of betaine aldehyde to the corresponding acid. The protein is Betaine aldehyde dehydrogenase of Serratia proteamaculans (strain 568).